A 345-amino-acid polypeptide reads, in one-letter code: V-type proton ATPase subunit d (345 aa).

Position 1 is an N-acetylmethionine (Met-1).

The protein belongs to the V-ATPase V0D/AC39 subunit family. V-ATPase is a heteromultimeric enzyme composed of a peripheral catalytic V1 complex (components A to H) attached to an integral membrane V0 proton pore complex (components: a, c, c', c'', d, e, f and VOA1).

The protein resides in the vacuole membrane. Functionally, subunit of the V0 complex of vacuolar(H+)-ATPase (V-ATPase), a multisubunit enzyme composed of a peripheral complex (V1) that hydrolyzes ATP and a membrane integral complex (V0) that translocates protons. V-ATPase is responsible for acidifying and maintaining the pH of intracellular compartments. This subunit is a non-integral membrane component of the membrane pore domain and is required for proper assembly of the V0 sector. Might be involved in the regulated assembly of V1 subunits onto the membrane sector or alternatively may prevent the passage of protons through V0 pores. In Saccharomyces cerevisiae (strain ATCC 204508 / S288c) (Baker's yeast), this protein is V-type proton ATPase subunit d.